Here is a 359-residue protein sequence, read N- to C-terminus: Alanine racemase, biosynthetic (359 aa).

Lysine 34 functions as the Proton acceptor; specific for D-alanine in the catalytic mechanism. At lysine 34 the chain carries N6-(pyridoxal phosphate)lysine. The residue at position 122 (lysine 122) is an N6-carboxylysine. Arginine 129 serves as a coordination point for substrate. Tyrosine 255 functions as the Proton acceptor; specific for L-alanine in the catalytic mechanism. Methionine 303 contacts substrate.

Belongs to the alanine racemase family. In terms of assembly, homodimer. Pyridoxal 5'-phosphate is required as a cofactor.

The catalysed reaction is L-alanine = D-alanine. Its pathway is amino-acid biosynthesis; D-alanine biosynthesis; D-alanine from L-alanine: step 1/1. The protein operates within cell wall biogenesis; peptidoglycan biosynthesis. In terms of biological role, catalyzes the interconversion of L-alanine and D-alanine. Provides the D-alanine required for cell wall biosynthesis. The polypeptide is Alanine racemase, biosynthetic (Escherichia coli (strain K12)).